The sequence spans 292 residues: Syntaxin-19 (292 aa).

A t-SNARE coiled-coil homology domain is found at 207–269 (LSEIEQRHKE…NNTKEKFGLA (63 aa)).

It belongs to the syntaxin family. Interacts with EGFR. Expressed in stomach, lung and skin (at protein level). In stomach, strongly expressed in the mucosa of the fundus, in epithelial cells of gastric pits, and in gastric glands (at protein level). In skin, expressed in the epidermis, dermis, and epithelial layer of the hair bulb (at protein level).

Its subcellular location is the cell membrane. The protein resides in the cytoplasm. In terms of biological role, plays a role in endosomal trafficking of the epidermal growth factor receptor (EGFR). The chain is Syntaxin-19 from Mus musculus (Mouse).